Consider the following 282-residue polypeptide: E3 ubiquitin-protein ligase SIAH1 (282 aa).

Residues 1–17 (MSRQTATALPTGTSKCP) are compositionally biased toward polar residues. Residues 1 to 22 (MSRQTATALPTGTSKCPPSQRV) are disordered. Serine 19 is subject to Phosphoserine; by ATM and ATR. The RING-type zinc finger occupies 41–76 (CPVCFDYVLPPILQCQSGHLVCSNCRPKLTCCPTCR). The SBD stretch occupies residues 90–282 (VANSVLFPCK…LGINVTISMC (193 aa)). The segment at 93-153 (SVLFPCKYAS…VMPHLMHQHK (61 aa)) adopts an SIAH-type zinc-finger fold. Cysteine 98, cysteine 105, histidine 117, cysteine 121, cysteine 128, cysteine 135, histidine 147, and histidine 152 together coordinate Zn(2+).

Belongs to the SINA (Seven in absentia) family. In terms of assembly, homodimer. Interacts with group 1 glutamate receptors GRM1 and GRM5. Interacts with DAB1, which may inhibit its activity. Interacts with UBE2E2. Interacts with PEG3. Interacts with GAPDH; leading to stabilize SIAH1. Component of some large E3 complex composed of UBE2D1, SIAH1, CACYBP/SIP, SKP1, APC and TBL1X. Interacts with UBE2I. Interacts with alpha-tubulin. Interacts with PEG10, which may inhibit its activity. Interacts with KHDRBS3. Interacts with SNCAIP. Interacts with HIPK2; the interaction is promoted by DAZAP2 and results in SIAH1-mediated ubiquitination and subsequent proteasomal degradation of HIPK2. Interacts with DAZAP2; the interaction is decreased following phosphorylation of DAZAP2 by HIPK2. Interacts with Bassoon/BSN and Piccolo/PLCO; these interactions negatively regulate SIAH1 E3 ligase activity. Interacts with DCC. Interacts with AXIN1; catalyzes AXIN1 ubiquitination and subsequent proteasome-mediated ubiquitin-dependent degradation. Phosphorylated on Ser-19 by ATM and ATR. This phosphorylation disrupts SIAH1 interaction with HIPK2, and subsequent proteasomal degradation of HIPK2. Widely expressed at a low level. Down-regulated in advanced hepatocellular carcinomas.

The protein localises to the cytoplasm. It localises to the nucleus. The catalysed reaction is S-ubiquitinyl-[E2 ubiquitin-conjugating enzyme]-L-cysteine + [acceptor protein]-L-lysine = [E2 ubiquitin-conjugating enzyme]-L-cysteine + N(6)-ubiquitinyl-[acceptor protein]-L-lysine.. It functions in the pathway protein modification; protein ubiquitination. Its activity is regulated as follows. Inhibited by interaction with SNCAIP (isoform 2, but not isoform 1). May be inhibited by interaction with PEG10. E3 ubiquitin-protein ligase that mediates ubiquitination and subsequent proteasomal degradation of target proteins. E3 ubiquitin ligases accept ubiquitin from an E2 ubiquitin-conjugating enzyme in the form of a thioester and then directly transfers the ubiquitin to targeted substrates. Mediates E3 ubiquitin ligase activity either through direct binding to substrates or by functioning as the essential RING domain subunit of larger E3 complexes. Triggers the ubiquitin-mediated degradation of many substrates, including proteins involved in transcription regulation (ELL2, MYB, POU2AF1, PML and RBBP8), a cell surface receptor (DCC), the cell-surface receptor-type tyrosine kinase FLT3, the cytoplasmic signal transduction molecules (KLF10/TIEG1 and NUMB), an antiapoptotic protein (BAG1), a microtubule motor protein (KIF22), a protein involved in synaptic vesicle function in neurons (SYP), a structural protein (CTNNB1) and SNCAIP. Confers constitutive instability to HIPK2 through proteasomal degradation. It is thereby involved in many cellular processes such as apoptosis, tumor suppression, cell cycle, axon guidance, transcription regulation, spermatogenesis and TNF-alpha signaling. Has some overlapping function with SIAH2. Induces apoptosis in cooperation with PEG3. Upon nitric oxid (NO) generation that follows apoptotic stimulation, interacts with S-nitrosylated GAPDH, mediating the translocation of GAPDH to the nucleus. GAPDH acts as a stabilizer of SIAH1, facilitating the degradation of nuclear proteins. Mediates ubiquitination and degradation of EGLN2 and EGLN3 in response to the unfolded protein response (UPR), leading to their degradation and subsequent stabilization of ATF4. Also part of the Wnt signaling pathway in which it mediates the Wnt-induced ubiquitin-mediated proteasomal degradation of AXIN1. In Homo sapiens (Human), this protein is E3 ubiquitin-protein ligase SIAH1 (SIAH1).